A 445-amino-acid polypeptide reads, in one-letter code: Phosphoglucosamine mutase (445 aa).

The active-site Phosphoserine intermediate is Ser-102. Residues Ser-102, Asp-241, Asp-243, and Asp-245 each coordinate Mg(2+). At Ser-102 the chain carries Phosphoserine.

Belongs to the phosphohexose mutase family. Mg(2+) is required as a cofactor. Post-translationally, activated by phosphorylation.

The catalysed reaction is alpha-D-glucosamine 1-phosphate = D-glucosamine 6-phosphate. In terms of biological role, catalyzes the conversion of glucosamine-6-phosphate to glucosamine-1-phosphate. The protein is Phosphoglucosamine mutase of Cronobacter sakazakii (strain ATCC BAA-894) (Enterobacter sakazakii).